The chain runs to 180 residues: Probable chorismate pyruvate-lyase (180 aa).

3 residues coordinate substrate: R76, L113, and E171.

The protein belongs to the UbiC family.

Its subcellular location is the cytoplasm. It carries out the reaction chorismate = 4-hydroxybenzoate + pyruvate. The protein operates within cofactor biosynthesis; ubiquinone biosynthesis. Functionally, removes the pyruvyl group from chorismate, with concomitant aromatization of the ring, to provide 4-hydroxybenzoate (4HB) for the ubiquinone pathway. In Pseudoalteromonas translucida (strain TAC 125), this protein is Probable chorismate pyruvate-lyase.